Reading from the N-terminus, the 632-residue chain is Pescadillo homolog (632 aa).

The disordered stretch occupies residues 306–341 (GDDADVDMDEGAKETDEEEDEDFVERPSKAQEVDDV). A compositionally biased stretch (acidic residues) spans 307-328 (DDADVDMDEGAKETDEEEDEDF). The BRCT domain maps to 361 to 459 (RQNLLFSPYT…KIISSEGYGP (99 aa)). 3 disordered regions span residues 485–535 (GEKA…QNPS), 565–585 (TKVH…EEDL), and 601–632 (MQYS…EAKA). Residues 492–516 (QEGEEEEEAAEQDEGESEDEEEDGK) show a composition bias toward acidic residues. Residues 521-531 (AEYPPALLAAA) show a composition bias toward low complexity. 2 stretches are compositionally biased toward basic and acidic residues: residues 576 to 585 (QKEKKGEEDL) and 605 to 616 (NREKAAEKEKLE). A coiled-coil region spans residues 595 to 632 (AKLYEKMQYSNREKAAEKEKLEKKRKAIEKRKAKEAKA).

The protein belongs to the pescadillo family. As to quaternary structure, component of the NOP7 complex, composed of ERB1, NOP7 and YTM1. The complex is held together by ERB1, which interacts with NOP7 via its N-terminal domain and with YTM1 via a high-affinity interaction between the seven-bladed beta-propeller domains of the 2 proteins. The NOP7 complex associates with the 66S pre-ribosome.

Its subcellular location is the nucleus. The protein localises to the nucleolus. The protein resides in the nucleoplasm. Component of the NOP7 complex, which is required for maturation of the 25S and 5.8S ribosomal RNAs and formation of the 60S ribosome. The chain is Pescadillo homolog from Cryptococcus neoformans var. neoformans serotype D (strain B-3501A) (Filobasidiella neoformans).